Here is a 156-residue protein sequence, read N- to C-terminus: VapC ribonuclease AF_1683 (156 aa).

In terms of domain architecture, PINc spans 4–125; sequence LIDTGIFFGF…KLISYDSRFS (122 aa). Positions 6 and 103 each coordinate Mg(2+).

This sequence belongs to the PINc/VapC protein family. The cofactor is Mg(2+).

Functionally, toxic component of a type II toxin-antitoxin (TA) system. An RNase. This is VapC ribonuclease AF_1683 from Archaeoglobus fulgidus (strain ATCC 49558 / DSM 4304 / JCM 9628 / NBRC 100126 / VC-16).